Consider the following 300-residue polypeptide: Ribosomal protein bS6--L-glutamate ligase (300 aa).

The ATP-grasp domain occupies 104–287; the sequence is MQLLARQGID…IAGKMIRWIE (184 aa). ATP-binding positions include K141, 178–179, D187, and 211–213; these read EY and RSN. The Mg(2+) site is built by D248, E260, and N262. Residues D248, E260, and N262 each contribute to the Mn(2+) site.

The protein belongs to the RimK family. Mg(2+) serves as cofactor. Mn(2+) is required as a cofactor.

Functionally, an L-glutamate ligase that catalyzes the ATP-dependent post-translational addition of glutamate residues to the C-terminus of ribosomal protein bS6 (RpsF). Is also able to catalyze the synthesis of poly-alpha-glutamate in vitro, via ATP hydrolysis from unprotected glutamate as substrate. The number of glutamate residues added to either RpsF or to poly-alpha-glutamate changes with pH. This Escherichia coli O139:H28 (strain E24377A / ETEC) protein is Ribosomal protein bS6--L-glutamate ligase.